The primary structure comprises 237 residues: Phosphatidylserine decarboxylase proenzyme (237 aa).

Catalysis depends on Ser206, which acts as the Schiff-base intermediate with substrate; via pyruvic acid. Ser206 bears the Pyruvic acid (Ser); by autocatalysis mark.

The protein belongs to the phosphatidylserine decarboxylase family. PSD-A subfamily. Heterodimer of a large membrane-associated beta subunit and a small pyruvoyl-containing alpha subunit. Pyruvate is required as a cofactor. Post-translationally, is synthesized initially as an inactive proenzyme. Formation of the active enzyme involves a self-maturation process in which the active site pyruvoyl group is generated from an internal serine residue via an autocatalytic post-translational modification. Two non-identical subunits are generated from the proenzyme in this reaction, and the pyruvate is formed at the N-terminus of the alpha chain, which is derived from the carboxyl end of the proenzyme. The post-translation cleavage follows an unusual pathway, termed non-hydrolytic serinolysis, in which the side chain hydroxyl group of the serine supplies its oxygen atom to form the C-terminus of the beta chain, while the remainder of the serine residue undergoes an oxidative deamination to produce ammonia and the pyruvoyl prosthetic group on the alpha chain.

Its subcellular location is the cell membrane. It carries out the reaction a 1,2-diacyl-sn-glycero-3-phospho-L-serine + H(+) = a 1,2-diacyl-sn-glycero-3-phosphoethanolamine + CO2. The protein operates within phospholipid metabolism; phosphatidylethanolamine biosynthesis; phosphatidylethanolamine from CDP-diacylglycerol: step 2/2. Catalyzes the formation of phosphatidylethanolamine (PtdEtn) from phosphatidylserine (PtdSer). The chain is Phosphatidylserine decarboxylase proenzyme from Rhodococcus erythropolis (strain PR4 / NBRC 100887).